The following is a 402-amino-acid chain: MIIHPKVRGFICTTTHPLGCERNVLEQIAATRARGVRNDGPKKVLVIGASSGYGLASRITAAFGFGADTLGVFFEKPGTASKAGTAGWYNSAAFDKHAKAAGLYSKSINGDAFSDAARAQVIELIKTEMGGQVDLVVYSLASPVRKLPGSGEVKRSALKPIGQTYTATAIDTNKDTIIQASIEPASAQEIEETITVMGGQDWELWIDALEGAGVLADGARSVAFSYIGTEITWPIYWHGALGKAKVDLDRTAQRLNARLAKHGGGANVAVLKSVVTQASAAIPVMPLYISMVYKIMKEKGLHEGTIEQLDRLFRERLYRQDGQPAEVDEQNRLRLDDWELRDDVQDACKALWPQVTTENLFELTDYAGYKHEFLKLFGFGRTDVDYDADVATDVAFDCIELA.

NAD(+) is bound by residues 48–53 (GASSGY), 74–75 (FE), 111–112 (DA), and 140–141 (LA). Tyr226 serves as a coordination point for substrate. Tyr236 serves as the catalytic Proton donor. Residues Lys245 and 274–276 (VVT) contribute to the NAD(+) site.

This sequence belongs to the TER reductase family. As to quaternary structure, monomer.

It catalyses the reaction a 2,3-saturated acyl-[ACP] + NAD(+) = a (2E)-enoyl-[ACP] + NADH + H(+). It carries out the reaction a 2,3-saturated acyl-CoA + NAD(+) = a (2E)-enoyl-CoA + NADH + H(+). It functions in the pathway lipid metabolism; fatty acid biosynthesis. Involved in the final reduction of the elongation cycle of fatty acid synthesis (FAS II). Catalyzes the reduction of a carbon-carbon double bond in an enoyl moiety that is covalently linked to an acyl carrier protein (ACP). It can also use crotonyl-CoA. The polypeptide is Enoyl-[acyl-carrier-protein] reductase [NADH] (Xanthomonas oryzae pv. oryzae (strain MAFF 311018)).